Here is a 422-residue protein sequence, read N- to C-terminus: Dihydroorotase (422 aa).

Positions 61 and 63 each coordinate Zn(2+). Substrate contacts are provided by residues 63–65 (HLR) and Asn-95. Position 153 (Asp-153) interacts with Zn(2+). Asn-278 provides a ligand contact to substrate. Residue Asp-305 coordinates Zn(2+). Asp-305 is a catalytic residue. Substrate contacts are provided by residues His-309 and 322 to 323 (PG).

Belongs to the metallo-dependent hydrolases superfamily. DHOase family. Class I DHOase subfamily. In terms of assembly, monomer. Forms a 1:1 stoichiometric complex with PyrB. The complex exists as an equilibrium mixture of heterohexamers, composed of 3 PyrC and 3 PyrB subunits, and dodecamers. The complex has both DHOase and ATCase activities. It depends on Zn(2+) as a cofactor.

The enzyme catalyses (S)-dihydroorotate + H2O = N-carbamoyl-L-aspartate + H(+). Its pathway is pyrimidine metabolism; UMP biosynthesis via de novo pathway; (S)-dihydroorotate from bicarbonate: step 3/3. The monomer has very low activity by itself. Activated several thousandfold by formation of a complex with PyrB aspartate carbamoyltransferase (ATCase). Functionally, catalyzes the reversible cyclization of carbamoyl aspartate to dihydroorotate. The chain is Dihydroorotase from Aquifex aeolicus (strain VF5).